The primary structure comprises 209 residues: Orotate phosphoribosyltransferase (209 aa).

5-phospho-alpha-D-ribose 1-diphosphate contacts are provided by residues Arg96, Lys100, His102, and 122 to 130 (EDLISTGGS). Position 126 (Ser126) interacts with orotate.

Belongs to the purine/pyrimidine phosphoribosyltransferase family. PyrE subfamily. Homodimer. The cofactor is Mg(2+).

The enzyme catalyses orotidine 5'-phosphate + diphosphate = orotate + 5-phospho-alpha-D-ribose 1-diphosphate. It participates in pyrimidine metabolism; UMP biosynthesis via de novo pathway; UMP from orotate: step 1/2. Functionally, catalyzes the transfer of a ribosyl phosphate group from 5-phosphoribose 1-diphosphate to orotate, leading to the formation of orotidine monophosphate (OMP). This Streptococcus pyogenes serotype M3 (strain ATCC BAA-595 / MGAS315) protein is Orotate phosphoribosyltransferase.